Consider the following 152-residue polypeptide: Large ribosomal subunit protein uL13 (152 aa).

This sequence belongs to the universal ribosomal protein uL13 family. As to quaternary structure, part of the 50S ribosomal subunit.

Its function is as follows. This protein is one of the early assembly proteins of the 50S ribosomal subunit, although it is not seen to bind rRNA by itself. It is important during the early stages of 50S assembly. This is Large ribosomal subunit protein uL13 from Wolbachia pipientis subsp. Culex pipiens (strain wPip).